The sequence spans 161 residues: MPALILPLVDAATHWPERGGLVGLDLGTKTIGVAVSNPDRRLATGVETIQRKAFKQDAARLLAIAAERKVVGFVLGLPINMDGSEGPRAQSTRAFARNLANLTTLPIGLWDERLSTAAVERELIGMDVSRAKRAEVIDEHAAIFILQGALDRLANLRTGNG.

Belongs to the YqgF nuclease family.

It localises to the cytoplasm. Its function is as follows. Could be a nuclease involved in processing of the 5'-end of pre-16S rRNA. This Bradyrhizobium diazoefficiens (strain JCM 10833 / BCRC 13528 / IAM 13628 / NBRC 14792 / USDA 110) protein is Putative pre-16S rRNA nuclease.